The primary structure comprises 50 residues: MARYRCCRSQSRSRCRRRRRRCRTRRRRCCRRRRRRVCCRRYTVVRCRRR.

Belongs to the protamine P1 family. In terms of tissue distribution, testis.

Its subcellular location is the nucleus. It is found in the chromosome. Functionally, protamines substitute for histones in the chromatin of sperm during the haploid phase of spermatogenesis. They compact sperm DNA into a highly condensed, stable and inactive complex. The polypeptide is Sperm protamine P1 (PRM1) (Chilonatalus micropus (Cuban funnel-eared bat)).